The following is an 882-amino-acid chain: Lon protease homolog, mitochondrial (882 aa).

The transit peptide at M1–Y34 directs the protein to the mitochondrion. The region spanning T68–R281 is the Lon N-terminal domain. G435–T442 is a binding site for ATP. One can recognise a Lon proteolytic domain in the interval P687 to S878. Active-site residues include S784 and K827.

It belongs to the peptidase S16 family. Homohexamer or homoheptamer. Organized in a ring with a central cavity.

Its subcellular location is the mitochondrion matrix. The enzyme catalyses Hydrolysis of proteins in presence of ATP.. Its function is as follows. ATP-dependent serine protease that mediates the selective degradation of misfolded, unassembled or oxidatively damaged polypeptides as well as certain short-lived regulatory proteins in the mitochondrial matrix. May also have a chaperone function in the assembly of inner membrane protein complexes. Participates in the regulation of mitochondrial gene expression and in the maintenance of the integrity of the mitochondrial genome. Binds to mitochondrial DNA in a site-specific manner. This chain is Lon protease homolog, mitochondrial, found in Phaeodactylum tricornutum (strain CCAP 1055/1).